Here is a 44-residue protein sequence, read N- to C-terminus: Photosystem I reaction center subunit IX (44 aa).

A helical membrane pass occupies residues 9-29 (FVRSAPVVAAIWLSLTAGIII).

This sequence belongs to the PsaJ family.

It is found in the cellular thylakoid membrane. In terms of biological role, may help in the organization of the PsaE and PsaF subunits. The protein is Photosystem I reaction center subunit IX of Prochlorococcus marinus (strain MIT 9301).